A 61-amino-acid polypeptide reads, in one-letter code: UPF0434 protein PSEEN1604 (61 aa).

This sequence belongs to the UPF0434 family.

In Pseudomonas entomophila (strain L48), this protein is UPF0434 protein PSEEN1604.